Here is a 268-residue protein sequence, read N- to C-terminus: Undecaprenyl-diphosphatase (268 aa).

A run of 7 helical transmembrane segments spans residues 42-62 (VPGKVFEVVIQLGAILAICVL), 86-106 (AIFVALIPAGLLGVLYHDFIL), 108-128 (VLFTPYVVCAALITGGIAIVV), 158-178 (IALVPGVSRSGATILGALLVG), 184-204 (AAEFSFFLAIPVMLGASVVSL), 218-238 (LIAAGFIAAFISALLVVKWLV), and 246-266 (FTVFGWYRILFGSLLLIYFSL).

Belongs to the UppP family.

The protein localises to the cell inner membrane. It catalyses the reaction di-trans,octa-cis-undecaprenyl diphosphate + H2O = di-trans,octa-cis-undecaprenyl phosphate + phosphate + H(+). In terms of biological role, catalyzes the dephosphorylation of undecaprenyl diphosphate (UPP). Confers resistance to bacitracin. The polypeptide is Undecaprenyl-diphosphatase (Parvibaculum lavamentivorans (strain DS-1 / DSM 13023 / NCIMB 13966)).